The chain runs to 426 residues: MAIAHLATEYVFSDFLLKEPTEPKFKGLRLELAVDKMVTCIAVGLPLLLISLAFAQEISIGTQISCFSPSSFSWRQAAFVDSYCWAAVQQKSSLQSESGNLPLWLHKFFPYILLLFAILLYLPALFWRFSAAPHLCSDLKFIMEELDKVYNRAIKAAKSARDLDLRDGPGPPGVTENVGQSLWEISESHFKYPIVEQYLKTKKNSSHLIMKYISCRLVTFVVILLACIYLSYYFSLSSLSDEFLCSIKSGVLKNDSTIPDRFQCKLIAVGIFQLLSLINLIVYALLIPVVVYTFFIPFRQKTDILKVYEILPTFDVLHFKSEGYNDLSLYNLFLEENISELKSYKCLKVLENIKSNGQGIDPMLLLTNLGMIKMDIIDGKIPTSLQTKGEDQGSQRVEFKDLDLSSEAAANNGEKNSRQRLLNPSC.

The Cytoplasmic segment spans residues 1-40; sequence MAIAHLATEYVFSDFLLKEPTEPKFKGLRLELAVDKMVTC. Cysteine 40 carries the post-translational modification S-nitrosocysteine. A helical membrane pass occupies residues 41–61; that stretch reads IAVGLPLLLISLAFAQEISIG. At 62–106 the chain is on the extracellular side; the sequence is TQISCFSPSSFSWRQAAFVDSYCWAAVQQKSSLQSESGNLPLWLH. 2 disulfide bridges follow: cysteine 66-cysteine 264 and cysteine 84-cysteine 245. The helical transmembrane segment at 107–127 threads the bilayer; that stretch reads KFFPYILLLFAILLYLPALFW. Over 128-216 the chain is Cytoplasmic; that stretch reads RFSAAPHLCS…HLIMKYISCR (89 aa). Tyrosine 198 is subject to Phosphotyrosine. A helical membrane pass occupies residues 217-237; the sequence is LVTFVVILLACIYLSYYFSLS. Topologically, residues 238 to 277 are extracellular; sequence SLSDEFLCSIKSGVLKNDSTIPDRFQCKLIAVGIFQLLSL. Asparagine 254 carries N-linked (GlcNAc...) asparagine glycosylation. A helical transmembrane segment spans residues 278-298; the sequence is INLIVYALLIPVVVYTFFIPF. The Cytoplasmic segment spans residues 299–426; the sequence is RQKTDILKVY…SRQRLLNPSC (128 aa). At cysteine 346 the chain carries S-nitrosocysteine.

This sequence belongs to the pannexin family. As to quaternary structure, homoheptameric. In terms of processing, S-nitrosylation inhibits channel currents and ATP release. N-glycosylation may play a role in cell surface targeting. Exists in three glycosylation states: non-glycosylated (GLY0), high-mannose glycosylated (GLY1), and fully mature glycosylated (GLY2). Post-translationally, phosphorylated at Tyr-198 by SRC. Phosphorylation activates ATP release. Constitutively phosphorylated in vascular smooth muscle cells. In terms of processing, cleaved by CASP3 and CASP7 during apoptosis. Cleavage opens the channel for the release of metabolites and induces plasma membrane permeability during apoptosis. In terms of tissue distribution, widely expressed, including in cartilage, skin, spleen and brain.

The protein resides in the cell membrane. Its subcellular location is the endoplasmic reticulum membrane. The enzyme catalyses chloride(in) = chloride(out). It carries out the reaction iodide(out) = iodide(in). It catalyses the reaction Ca(2+)(in) = Ca(2+)(out). The catalysed reaction is ATP(in) = ATP(out). The enzyme catalyses K(+)(in) = K(+)(out). It carries out the reaction Na(+)(in) = Na(+)(out). It catalyses the reaction nitrate(in) = nitrate(out). The catalysed reaction is L-aspartate(out) = L-aspartate(in). The enzyme catalyses L-glutamate(out) = L-glutamate(in). It carries out the reaction D-gluconate(in) = D-gluconate(out). It catalyses the reaction spermidine(in) = spermidine(out). In terms of biological role, ion channel involved in a variety of physiological functions such as blood pressure regulation, apoptotic cell clearance and oogenesis. Forms anion-selective channels with relatively low conductance and an order of permeabilities: nitrate&gt;iodide&gt;chlroride&gt;&gt;aspartate=glutamate=gluconate. Can release ATP upon activation through phosphorylation or cleavage at C-terminus. May play a role as a Ca(2+)-leak channel to regulate ER Ca(2+) homeostasis. Functionally, during apoptosis and after cleavage by caspases of the C-terminal tail, acts as a plasma membrane channel which mediates the regulated release of find-me signals, such as nucleotides ATP and UTP, and selective plasme membrane permeability. The polypeptide is Pannexin-1 (Mus musculus (Mouse)).